Here is a 347-residue protein sequence, read N- to C-terminus: UDP-3-O-acylglucosamine N-acyltransferase (347 aa).

Catalysis depends on histidine 241, which acts as the Proton acceptor.

It belongs to the transferase hexapeptide repeat family. LpxD subfamily. In terms of assembly, homotrimer.

The catalysed reaction is a UDP-3-O-[(3R)-3-hydroxyacyl]-alpha-D-glucosamine + a (3R)-hydroxyacyl-[ACP] = a UDP-2-N,3-O-bis[(3R)-3-hydroxyacyl]-alpha-D-glucosamine + holo-[ACP] + H(+). Its pathway is bacterial outer membrane biogenesis; LPS lipid A biosynthesis. In terms of biological role, catalyzes the N-acylation of UDP-3-O-acylglucosamine using 3-hydroxyacyl-ACP as the acyl donor. Is involved in the biosynthesis of lipid A, a phosphorylated glycolipid that anchors the lipopolysaccharide to the outer membrane of the cell. The chain is UDP-3-O-acylglucosamine N-acyltransferase from Neisseria gonorrhoeae (strain NCCP11945).